The sequence spans 77 residues: MGRSFYHFLMTYRDPKLTDQKTEFANNAYRDHSFPKQTRNYHILCDYLEFNAPYLPGMSIFDELWDAYLLDEEKNKH.

Belongs to the UPF0346 family.

The chain is UPF0346 protein LMOf2365_1885 from Listeria monocytogenes serotype 4b (strain F2365).